The sequence spans 124 residues: ATP synthase epsilon chain (124 aa).

This sequence belongs to the ATPase epsilon chain family. F-type ATPases have 2 components, CF(1) - the catalytic core - and CF(0) - the membrane proton channel. CF(1) has five subunits: alpha(3), beta(3), gamma(1), delta(1), epsilon(1). CF(0) has three main subunits: a, b and c.

The protein resides in the cell membrane. Its function is as follows. Produces ATP from ADP in the presence of a proton gradient across the membrane. The chain is ATP synthase epsilon chain from Corynebacterium glutamicum (strain ATCC 13032 / DSM 20300 / JCM 1318 / BCRC 11384 / CCUG 27702 / LMG 3730 / NBRC 12168 / NCIMB 10025 / NRRL B-2784 / 534).